We begin with the raw amino-acid sequence, 279 residues long: Probable autolysin LDP (279 aa).

A signal peptide spans 1–24; that stretch reads MKKSLTVTVSSVLAFLALNNAAHA. Residues 51–94 enclose the LysM domain; sequence TTYTVVAGDSLYKIALEHHLTLNQLYSYNPGVTPLIFPGDVISL. Residues 158-279 form the Peptidase C51 domain; it reads VPTVPVAHNY…LNPGKYNYIH (122 aa).

It catalyses the reaction Hydrolyzes the link between N-acetylmuramoyl residues and L-amino acid residues in certain cell-wall glycopeptides.. In terms of biological role, has weak lytic activity toward S.aureus cells. The protein is Probable autolysin LDP of Staphylococcus aureus (strain NCTC 8325 / PS 47).